A 151-amino-acid chain; its full sequence is Ribosome maturation factor RimP (151 aa).

Belongs to the RimP family.

The protein resides in the cytoplasm. In terms of biological role, required for maturation of 30S ribosomal subunits. The chain is Ribosome maturation factor RimP from Caldicellulosiruptor saccharolyticus (strain ATCC 43494 / DSM 8903 / Tp8T 6331).